A 399-amino-acid polypeptide reads, in one-letter code: Probable sugar efflux transporter (399 aa).

The next 12 membrane-spanning stretches (helical) occupy residues 15 to 35 (VVTL…PVGL), 50 to 70 (VGMM…PFML), 81 to 101 (LIGL…AWSF), 103 to 123 (VLVI…SITS), 136 to 156 (AQAL…GIPI), 168 to 188 (MTFL…VKLL), 209 to 229 (PALV…YTAY), 246 to 266 (FATV…ILFG), 273 to 293 (ASGL…LLLP), 301 to 321 (LMLL…GMQV), 333 to 353 (VAMS…ALVG), and 364 to 384 (SIGY…LMIF).

It belongs to the major facilitator superfamily. SotB (TC 2.A.1.2) family.

It localises to the cell inner membrane. Its function is as follows. Involved in the efflux of sugars. The physiological role may be the reduction of the intracellular concentration of toxic sugars or sugar metabolites. The chain is Probable sugar efflux transporter from Klebsiella pneumoniae (strain 342).